The sequence spans 541 residues: Glucose-6-phosphate isomerase (541 aa).

The active-site Proton donor is E346. Residues H377 and K506 contribute to the active site.

This sequence belongs to the GPI family.

The protein resides in the cytoplasm. The enzyme catalyses alpha-D-glucose 6-phosphate = beta-D-fructose 6-phosphate. Its pathway is carbohydrate biosynthesis; gluconeogenesis. It participates in carbohydrate degradation; glycolysis; D-glyceraldehyde 3-phosphate and glycerone phosphate from D-glucose: step 2/4. Its function is as follows. Catalyzes the reversible isomerization of glucose-6-phosphate to fructose-6-phosphate. This chain is Glucose-6-phosphate isomerase, found in Rhizobium meliloti (strain 1021) (Ensifer meliloti).